Here is a 657-residue protein sequence, read N- to C-terminus: Major core protein 4b (657 aa).

Residues 1–61 (MESDSNIAIE…ITEEDVISAG (61 aa)) constitute a propeptide that is removed on maturation.

Belongs to the poxviridae protein P4b family. The precursor is cleaved to a mature protein during virion maturation. Proteolytic cleavage of major core proteins P4a (A10L), P4b (A3L), and VP8 (L4R), which occurs at a late stage of core formation, is required for production of infectious mature virions (MV).

It is found in the virion. In terms of biological role, major component of the virion core that undergoes proteolytic processing during the immature virion (IV) to mature virion (MV) transition. Essential for the formation of a structurally normal core. The polypeptide is Major core protein 4b (Vertebrata (FPV)).